A 365-amino-acid chain; its full sequence is Cobalt-precorrin-5B C(1)-methyltransferase (365 aa).

It belongs to the CbiD family.

The catalysed reaction is Co-precorrin-5B + S-adenosyl-L-methionine = Co-precorrin-6A + S-adenosyl-L-homocysteine. The protein operates within cofactor biosynthesis; adenosylcobalamin biosynthesis; cob(II)yrinate a,c-diamide from sirohydrochlorin (anaerobic route): step 6/10. In terms of biological role, catalyzes the methylation of C-1 in cobalt-precorrin-5B to form cobalt-precorrin-6A. The polypeptide is Cobalt-precorrin-5B C(1)-methyltransferase (Pseudomonas fluorescens (strain Pf0-1)).